The chain runs to 359 residues: Phospho-N-acetylmuramoyl-pentapeptide-transferase (359 aa).

Helical transmembrane passes span 7–27, 28–48, 82–102, 103–123, 147–167, 179–199, 203–223, 229–249, 256–276, and 337–357; these read RSLTFTSLFFLLVISLIVNSY, IFNSLLIINIFLISSLISLVI, MGGIFIILPFLLLLLIVNNYV, DSVGILLLFFCTISFFIIGFL, ALIAVLFIIFASQSNYINPLI, IVIFPICFLTLVGLSNAVNLT, DGLAAGCSAIVFFGLGTEIFI, LIIYGLISYAMSGLCIGFLKY, IFMGDTGSLTIGAALGSISIL, and IVENFWKVNILLIVLGIVLKI.

This sequence belongs to the glycosyltransferase 4 family. MraY subfamily. Mg(2+) is required as a cofactor.

The protein resides in the cell inner membrane. It carries out the reaction UDP-N-acetyl-alpha-D-muramoyl-L-alanyl-gamma-D-glutamyl-meso-2,6-diaminopimeloyl-D-alanyl-D-alanine + di-trans,octa-cis-undecaprenyl phosphate = di-trans,octa-cis-undecaprenyl diphospho-N-acetyl-alpha-D-muramoyl-L-alanyl-D-glutamyl-meso-2,6-diaminopimeloyl-D-alanyl-D-alanine + UMP. The protein operates within cell wall biogenesis; peptidoglycan biosynthesis. Functionally, catalyzes the initial step of the lipid cycle reactions in the biosynthesis of the cell wall peptidoglycan: transfers peptidoglycan precursor phospho-MurNAc-pentapeptide from UDP-MurNAc-pentapeptide onto the lipid carrier undecaprenyl phosphate, yielding undecaprenyl-pyrophosphoryl-MurNAc-pentapeptide, known as lipid I. The sequence is that of Phospho-N-acetylmuramoyl-pentapeptide-transferase from Prochlorococcus marinus subsp. pastoris (strain CCMP1986 / NIES-2087 / MED4).